The chain runs to 248 residues: 3-deoxy-manno-octulosonate cytidylyltransferase (248 aa).

This sequence belongs to the KdsB family.

The protein localises to the cytoplasm. The enzyme catalyses 3-deoxy-alpha-D-manno-oct-2-ulosonate + CTP = CMP-3-deoxy-beta-D-manno-octulosonate + diphosphate. The protein operates within nucleotide-sugar biosynthesis; CMP-3-deoxy-D-manno-octulosonate biosynthesis; CMP-3-deoxy-D-manno-octulosonate from 3-deoxy-D-manno-octulosonate and CTP: step 1/1. It participates in bacterial outer membrane biogenesis; lipopolysaccharide biosynthesis. Its function is as follows. Activates KDO (a required 8-carbon sugar) for incorporation into bacterial lipopolysaccharide in Gram-negative bacteria. In Chlorobium chlorochromatii (strain CaD3), this protein is 3-deoxy-manno-octulosonate cytidylyltransferase.